The sequence spans 723 residues: Choline transporter-like protein 4 (723 aa).

Over 1 to 36 the chain is Cytoplasmic; it reads MGKKKQEEEQNSSEYGAPAQYDPTFNGPIHKRSCTD. The helical transmembrane segment at 37-57 threads the bilayer; sequence IICCVLFMLVITGYMVVGILA. The Extracellular portion of the chain corresponds to 58-245; sequence WLYGDPRHVL…RIFEDFAKTW (188 aa). N-linked (GlcNAc...) asparagine glycans are attached at residues Asn71, Asn202, Asn211, and Asn219. Residues 246 to 266 form a helical membrane-spanning segment; that stretch reads QWIVAGLVIAMVVSVLFLLLL. Residues 267-269 are Cytoplasmic-facing; it reads RFT. The chain crosses the membrane as a helical span at residues 270-290; that stretch reads APVLIWILIFGVLAVGAFGIW. Topologically, residues 291 to 325 are extracellular; sequence YCYNDYMSLASSNLTFSNVGFTTNVQVYLQVRDTW. A glycan (N-linked (GlcNAc...) asparagine) is linked at Asn303. Residues 326–346 form a helical membrane-spanning segment; sequence LAFLIILCIVEAVLILALIFL. Over 347–374 the chain is Cytoplasmic; sequence RTRILIAIALIQETSKALGHMMSTLLYP. A helical transmembrane segment spans residues 375–395; that stretch reads VVTFVLLLVCVSYWGITALYL. Residues 396-464 lie on the Extracellular side of the membrane; that stretch reads ATSGAPIYKV…RNLFNLQIYN (69 aa). N-linked (GlcNAc...) asparagine glycans are attached at residues Asn409, Asn421, and Asn430. A helical transmembrane segment spans residues 465 to 485; that stretch reads VVAFLWCVNFVIALGHCTLAG. Over 486–516 the chain is Cytoplasmic; sequence AFASYYWAFSKPADIPTFPLTQSFMRALRYH. The helical transmembrane segment at 517–537 threads the bilayer; that stretch reads VGSLAFGALILTLVQIVRIIL. The Extracellular portion of the chain corresponds to 538–578; the sequence is EYLDHKFKAAQNPCARFLMCCLKCCFWCLEKFIKFINRNAY. A helical transmembrane segment spans residues 579-599; it reads IMIAIYGKNFCVSAKNAFFLL. At 600 to 615 the chain is on the cytoplasmic side; that stretch reads MRNIVRVVVLDKVTDL. A helical transmembrane segment spans residues 616–636; that stretch reads LLFFGKLLVVGGIGVLAFFFF. Residues 637 to 655 lie on the Extracellular side of the membrane; the sequence is SGRIQLPGNTFQTAALNYY. The chain crosses the membrane as a helical span at residues 656–676; that stretch reads WMPIITVVFGAYLIAHGFFSV. The Cytoplasmic segment spans residues 677–723; sequence YNMGVDTLFLCFLEDLERNDGSAEKPYFMSKNLMKILNKKNKQPKTG.

This sequence belongs to the CTL (choline transporter-like) family.

The protein resides in the membrane. It localises to the apical cell membrane. It catalyses the reaction choline(out) + n H(+)(in) = choline(in) + n H(+)(out). The enzyme catalyses thiamine diphosphate(out) = thiamine diphosphate(in). Its function is as follows. Choline transporter that seems to play a role in the choline-acetylcholine system and is required to the efferent innervation of hair cells in the olivocochlear bundle for the maintenance of physiological function of outer hair cells and the protection of hair cells from acoustic injury. Also described as a thiamine pyrophosphate transporter. This is Choline transporter-like protein 4 (slc44a4) from Danio rerio (Zebrafish).